Here is a 592-residue protein sequence, read N- to C-terminus: Bifunctional enzyme BirA/CoaX (592 aa).

Residues 1–329 (MTVLKPSHWR…ISLRPDNRSV (329 aa)) are biotin--protein ligase. In terms of domain architecture, BPL/LPL catalytic spans 83–259 (QTALKHECAS…ELGAVLEQYA (177 aa)). The interval 336–592 (DSERFLLLEG…AAEGGESEHA (257 aa)) is type III pantothenate kinase. Position 344-351 (344-351 (EGGNSRLK)) interacts with ATP. Residues Tyr426 and 433–436 (GSDR) each bind substrate. The Proton acceptor role is filled by Asp435. Thr458 is a binding site for ATP. Thr508 is a binding site for substrate.

It in the N-terminal section; belongs to the biotin--protein ligase family. This sequence in the C-terminal section; belongs to the type III pantothenate kinase family. It depends on NH4(+) as a cofactor. The cofactor is K(+).

Its subcellular location is the cytoplasm. The catalysed reaction is biotin + L-lysyl-[protein] + ATP = N(6)-biotinyl-L-lysyl-[protein] + AMP + diphosphate + H(+). The enzyme catalyses (R)-pantothenate + ATP = (R)-4'-phosphopantothenate + ADP + H(+). Its pathway is cofactor biosynthesis; coenzyme A biosynthesis; CoA from (R)-pantothenate: step 1/5. Its function is as follows. Activates biotin to form biotinyl-5'-adenylate and transfers the biotin moiety to biotin-accepting proteins. Functionally, catalyzes the phosphorylation of pantothenate (Pan), the first step in CoA biosynthesis. This Neisseria gonorrhoeae (strain ATCC 700825 / FA 1090) protein is Bifunctional enzyme BirA/CoaX (birA/coaX).